Here is a 225-residue protein sequence, read N- to C-terminus: Pre-mRNA-splicing factor SPF27 (225 aa).

The stretch at 138–222 (SNDNLALMIE…QGDENKENIR (85 aa)) forms a coiled coil.

The protein belongs to the SPF27 family. Component of the pre-catalytic and catalytic spliceosome complexes. Component of the postcatalytic spliceosome P complex.

The protein localises to the nucleus. Required for pre-mRNA splicing as component of the activated spliceosome. May have a scaffolding role in the spliceosome assembly as it contacts all other components of the core complex. This chain is Pre-mRNA-splicing factor SPF27 (bcas2), found in Danio rerio (Zebrafish).